We begin with the raw amino-acid sequence, 222 residues long: Large ribosomal subunit protein uL4 (222 aa).

The disordered stretch occupies residues 50 to 72 (TRGRSEVSHSTRKPFRQKGTGNA).

Belongs to the universal ribosomal protein uL4 family. Part of the 50S ribosomal subunit.

Functionally, one of the primary rRNA binding proteins, this protein initially binds near the 5'-end of the 23S rRNA. It is important during the early stages of 50S assembly. It makes multiple contacts with different domains of the 23S rRNA in the assembled 50S subunit and ribosome. Forms part of the polypeptide exit tunnel. This Chlamydia muridarum (strain MoPn / Nigg) protein is Large ribosomal subunit protein uL4.